The following is a 298-amino-acid chain: Trimeric intracellular cation channel type A (298 aa).

The Lumenal segment spans residues 1 to 18 (MDLMSALSLGELALSFSR). The chain crosses the membrane as a helical span at residues 19-39 (VPLFPVFDLSYFIVSIIYLKY). Residues 40–51 (EPGAVELSRRHP) lie on the Cytoplasmic side of the membrane. A helical membrane pass occupies residues 52-72 (VASWLCAMLHCFGSYILADLL). The Lumenal segment spans residues 73–85 (LGEPIIDYFSNSS). Glycine 74 contacts Ca(2+). Residues 86–106 (SILLASGVWYLIFFCPLDLFY) form a helical membrane-spanning segment. Over 107–144 (KCVCFLPVKLIFVAMKEVVRVRKIAVGIHHAHHHYHHG) the chain is Cytoplasmic. Residues lysine 122 and arginine 126 each coordinate a 1,2-diacyl-sn-glycero-3-phospho-(1D-myo-inositol-4,5-bisphosphate). A helical transmembrane segment spans residues 145–165 (WFIMIATGWVKGSGVALLSNV). Over 166-178 (EQLLRGVWKPETN) the chain is Lumenal. Residues 179-199 (EILHMSFPTKASLYGAILFTL) form a helical membrane-spanning segment. Residues 200-209 (QQTRWLPVSK) lie on the Cytoplasmic side of the membrane. Residues 210 to 230 (ASLIFVFTMFMVSCKVFLTAT) traverse the membrane as a helical segment. Over 231–234 (HSHS) the chain is Lumenal. The helical transmembrane segment at 235-255 (SPFDILEGYICPVLFGATWGG) threads the bilayer. Residues 256-298 (DHHHDNHGAPHGMGLGTQHSGLPAKAKEELGEGSRKKKTKKAD) are Cytoplasmic-facing. Positions 260 to 298 (DNHGAPHGMGLGTQHSGLPAKAKEELGEGSRKKKTKKAD) are disordered. Over residues 280–289 (KAKEELGEGS) the composition is skewed to basic and acidic residues.

This sequence belongs to the TMEM38 family. As to quaternary structure, homotrimer; conformation seems to be controled by binding to diacylglycerol (DAG). As to expression, expressed at high levels in heart and striated muscle. Also detected in brain, lung and kidney.

The protein resides in the sarcoplasmic reticulum membrane. It is found in the nucleus membrane. The enzyme catalyses K(+)(in) = K(+)(out). Its activity is regulated as follows. Channel activity is activated by a change of voltage within the sarcoplasmic reticulum lumen and blocked by luminal high Ca(2+) levels. Intracellular monovalent cation channel required for maintenance of rapid intracellular calcium release. Acts as a potassium counter-ion channel that functions in synchronization with calcium release from intracellular stores. Opened by a change of voltage within the sarcoplasmic reticulum lumen. This chain is Trimeric intracellular cation channel type A (Tmem38a), found in Mus musculus (Mouse).